We begin with the raw amino-acid sequence, 125 residues long: uncharacterized protein (125 aa).

Residues 45 to 110 (IVPVGSKTLL…IGNVPLKILC (66 aa)) enclose the Cupin type-2 domain.

This is an uncharacterized protein from Methanocaldococcus jannaschii (strain ATCC 43067 / DSM 2661 / JAL-1 / JCM 10045 / NBRC 100440) (Methanococcus jannaschii).